Reading from the N-terminus, the 247-residue chain is UPF0309 protein LMOf2365_2617 (247 aa).

An SIS domain is found at 31-214; it reads VAESIENDGV…ETMVNDNFTP (184 aa).

It belongs to the UPF0309 family.

This chain is UPF0309 protein LMOf2365_2617, found in Listeria monocytogenes serotype 4b (strain F2365).